The sequence spans 270 residues: Putative pyruvate, phosphate dikinase regulatory protein 1 (270 aa).

151–158 contacts ADP; the sequence is GVSRTSKT.

It belongs to the pyruvate, phosphate/water dikinase regulatory protein family. PDRP subfamily.

It catalyses the reaction N(tele)-phospho-L-histidyl/L-threonyl-[pyruvate, phosphate dikinase] + ADP = N(tele)-phospho-L-histidyl/O-phospho-L-threonyl-[pyruvate, phosphate dikinase] + AMP + H(+). The catalysed reaction is N(tele)-phospho-L-histidyl/O-phospho-L-threonyl-[pyruvate, phosphate dikinase] + phosphate + H(+) = N(tele)-phospho-L-histidyl/L-threonyl-[pyruvate, phosphate dikinase] + diphosphate. Its function is as follows. Bifunctional serine/threonine kinase and phosphorylase involved in the regulation of the pyruvate, phosphate dikinase (PPDK) by catalyzing its phosphorylation/dephosphorylation. This is Putative pyruvate, phosphate dikinase regulatory protein 1 from Enterococcus faecalis (strain ATCC 700802 / V583).